Here is a 358-residue protein sequence, read N- to C-terminus: WD repeat-containing protein 53 (358 aa).

5 WD repeats span residues 8–46 (GHSSPILCLNASQEGLVASGAEGGDLVVWGEDGTLLGHT), 92–131 (VNEEEINCLSLNETENLLASADDSGTIKILDLENKKISRS), 134–174 (RHSN…PLWI), 195–234 (LNPALAHSVSVASCGNVFSCGAEDGKVRIFRVMGVKCEQE), and 239–278 (GHSLGVSQVCFLRESYLLLTGGNDGKIKLWDVSSEIEKKH). Basic residues predominate over residues 278 to 294 (HKSPTKHTHRKKTKRAA). The segment at 278–309 (HKSPTKHTHRKKTKRAAYTKQGGGTHASVTGE) is disordered.

Belongs to the WD repeat WDR53 family.

The polypeptide is WD repeat-containing protein 53 (WDR53) (Bos taurus (Bovine)).